Consider the following 364-residue polypeptide: Fructose-bisphosphate aldolase B (364 aa).

2 residues coordinate substrate: R56 and K147. The Proton acceptor role is filled by E188. K230 acts as the Schiff-base intermediate with dihydroxyacetone-P in catalysis.

This sequence belongs to the class I fructose-bisphosphate aldolase family. As to quaternary structure, homotetramer.

Its subcellular location is the cytoplasm. It is found in the cytoskeleton. The protein resides in the microtubule organizing center. The protein localises to the centrosome. It localises to the centriolar satellite. It carries out the reaction beta-D-fructose 1,6-bisphosphate = D-glyceraldehyde 3-phosphate + dihydroxyacetone phosphate. Its pathway is carbohydrate degradation; glycolysis; D-glyceraldehyde 3-phosphate and glycerone phosphate from D-glucose: step 4/4. The protein is Fructose-bisphosphate aldolase B (ALDOB) of Gallus gallus (Chicken).